Consider the following 78-residue polypeptide: Large ribosomal subunit protein bL28 (78 aa).

The tract at residues 1-24 is disordered; it reads MSRVCQVTGKRPAVGNNRSHANNA.

Belongs to the bacterial ribosomal protein bL28 family.

This is Large ribosomal subunit protein bL28 from Aeromonas salmonicida (strain A449).